A 297-amino-acid polypeptide reads, in one-letter code: Putative heme-binding peroxidase (297 aa).

H74 (proton acceptor) is an active-site residue. A heme b-binding site is contributed by H198. The active-site Tryptophan radical intermediate is W214.

This sequence belongs to the peroxidase family. Cytochrome c peroxidase subfamily. It depends on heme b as a cofactor.

Destroys radicals which are normally produced within the cells and which are toxic to biological systems. This chain is Putative heme-binding peroxidase, found in Yarrowia lipolytica (strain CLIB 122 / E 150) (Yeast).